The following is a 196-amino-acid chain: Protein GrpE (196 aa).

The disordered stretch occupies residues methionine 1 to aspartate 41.

Belongs to the GrpE family. In terms of assembly, homodimer.

Its subcellular location is the cytoplasm. Participates actively in the response to hyperosmotic and heat shock by preventing the aggregation of stress-denatured proteins, in association with DnaK and GrpE. It is the nucleotide exchange factor for DnaK and may function as a thermosensor. Unfolded proteins bind initially to DnaJ; upon interaction with the DnaJ-bound protein, DnaK hydrolyzes its bound ATP, resulting in the formation of a stable complex. GrpE releases ADP from DnaK; ATP binding to DnaK triggers the release of the substrate protein, thus completing the reaction cycle. Several rounds of ATP-dependent interactions between DnaJ, DnaK and GrpE are required for fully efficient folding. This is Protein GrpE from Klebsiella pneumoniae (strain 342).